A 343-amino-acid chain; its full sequence is Probable dual-specificity RNA methyltransferase RlmN (343 aa).

Glu83 serves as the catalytic Proton acceptor. The region spanning 89–323 (YLDRKTICVS…VSVRRSRGKD (235 aa)) is the Radical SAM core domain. Cys96 and Cys328 are joined by a disulfide. Residues Cys103, Cys107, and Cys110 each coordinate [4Fe-4S] cluster. S-adenosyl-L-methionine contacts are provided by residues 153–154 (GE), Ser185, 209–211 (SLH), and Asn285. Catalysis depends on Cys328, which acts as the S-methylcysteine intermediate.

It belongs to the radical SAM superfamily. RlmN family. It depends on [4Fe-4S] cluster as a cofactor.

The protein resides in the cytoplasm. It catalyses the reaction adenosine(2503) in 23S rRNA + 2 reduced [2Fe-2S]-[ferredoxin] + 2 S-adenosyl-L-methionine = 2-methyladenosine(2503) in 23S rRNA + 5'-deoxyadenosine + L-methionine + 2 oxidized [2Fe-2S]-[ferredoxin] + S-adenosyl-L-homocysteine. The catalysed reaction is adenosine(37) in tRNA + 2 reduced [2Fe-2S]-[ferredoxin] + 2 S-adenosyl-L-methionine = 2-methyladenosine(37) in tRNA + 5'-deoxyadenosine + L-methionine + 2 oxidized [2Fe-2S]-[ferredoxin] + S-adenosyl-L-homocysteine. In terms of biological role, specifically methylates position 2 of adenine 2503 in 23S rRNA and position 2 of adenine 37 in tRNAs. The sequence is that of Probable dual-specificity RNA methyltransferase RlmN from Deinococcus deserti (strain DSM 17065 / CIP 109153 / LMG 22923 / VCD115).